Reading from the N-terminus, the 301-residue chain is Probable alpha-L-glutamate ligase 2 (301 aa).

Positions 104–287 (LQLLSRKGIG…VTEPIVEYIE (184 aa)) constitute an ATP-grasp domain. Residues K141, 178–179 (EY), D187, and 211–213 (RSN) each bind ATP. The Mg(2+) site is built by D248, E260, and N262. Positions 248, 260, and 262 each coordinate Mn(2+).

This sequence belongs to the RimK family. Mg(2+) is required as a cofactor. Mn(2+) serves as cofactor.

This Shewanella baltica (strain OS195) protein is Probable alpha-L-glutamate ligase 2.